A 131-amino-acid chain; its full sequence is Bacteriohemerythrin (131 aa).

8 residues coordinate Fe cation: His-20, Glu-23, His-56, Glu-60, His-75, His-79, His-117, and Asp-122.

Belongs to the hemerythrin family. In terms of assembly, monomer.

Functionally, oxygen-binding protein. May be involved in a storage mechanism or for delivery to oxygen-requiring enzymes. The oxygen-binding site contains two iron atoms. The polypeptide is Bacteriohemerythrin (Aquifex aeolicus (strain VF5)).